Consider the following 130-residue polypeptide: UPF0102 protein Cthe_0758 (130 aa).

Belongs to the UPF0102 family.

This is UPF0102 protein Cthe_0758 from Acetivibrio thermocellus (strain ATCC 27405 / DSM 1237 / JCM 9322 / NBRC 103400 / NCIMB 10682 / NRRL B-4536 / VPI 7372) (Clostridium thermocellum).